Consider the following 295-residue polypeptide: Ent-pimara-9(11),15-diene synthase (295 aa).

It belongs to the terpene synthase family. As to quaternary structure, monomer. A divalent metal cation serves as cofactor.

It carries out the reaction ent-copalyl diphosphate = ent-pimara-9(11),15-diene + diphosphate. Its pathway is antibiotic biosynthesis. Functionally, involved in viguiepinol biosynthesis. Catalyzes the conversion of copalyl diphosphate (ent-CDP) into pimara-9(11),15-diene (PMD). This is Ent-pimara-9(11),15-diene synthase from Streptomyces sp. (strain KO-3988).